An 842-amino-acid chain; its full sequence is 9-beta-pimara-7,15-diene synthase, chloroplastic (842 aa).

The transit peptide at 1–56 directs the protein to the chloroplast; the sequence is MASPMEAVARSSLVLAPRRRRALGLLPAAAAAAPFVLDCRRRHNGGMRRPHVSFAC. Residues D591, D595, N735, S739, and E743 each coordinate Mg(2+). The short motif at 591–595 is the DDXXD motif element; it reads DDFFD.

Belongs to the terpene synthase family. Mg(2+) is required as a cofactor. Expressed in roots.

The protein localises to the plastid. Its subcellular location is the chloroplast. The catalysed reaction is 9alpha-copalyl diphosphate = 9beta-pimara-7,15-diene + diphosphate. In terms of biological role, involved in the biosynthesis of momilactone A and B phytoalexins. Catalyzes the conversion of syn-copalyl diphosphate to the phytoalexin precursor syn-pimara-7,15-diene. The chain is 9-beta-pimara-7,15-diene synthase, chloroplastic from Oryza sativa subsp. japonica (Rice).